Here is a 630-residue protein sequence, read N- to C-terminus: Phosphomethylpyrimidine synthase (630 aa).

Disordered stretches follow at residues 1–22 (MADI…TTGP) and 97–120 (AQRE…VPAF). Substrate-binding positions include Asn224, Met253, Tyr282, His318, 338 to 340 (SRG), 379 to 382 (DGLR), and Glu418. His422 contacts Zn(2+). Tyr445 contributes to the substrate binding site. Position 486 (His486) interacts with Zn(2+). Positions 566, 569, and 574 each coordinate [4Fe-4S] cluster.

It belongs to the ThiC family. In terms of assembly, homodimer. [4Fe-4S] cluster serves as cofactor.

The enzyme catalyses 5-amino-1-(5-phospho-beta-D-ribosyl)imidazole + S-adenosyl-L-methionine = 4-amino-2-methyl-5-(phosphooxymethyl)pyrimidine + CO + 5'-deoxyadenosine + formate + L-methionine + 3 H(+). It participates in cofactor biosynthesis; thiamine diphosphate biosynthesis. Catalyzes the synthesis of the hydroxymethylpyrimidine phosphate (HMP-P) moiety of thiamine from aminoimidazole ribotide (AIR) in a radical S-adenosyl-L-methionine (SAM)-dependent reaction. This Sphingopyxis alaskensis (strain DSM 13593 / LMG 18877 / RB2256) (Sphingomonas alaskensis) protein is Phosphomethylpyrimidine synthase.